A 232-amino-acid polypeptide reads, in one-letter code: MASSRTDPETEPESVFPREIRLFTDSYSESSRFCFCGHELSITQNFGSRLGVAARVWDAALSLCDYFESQNVDFRGKKVIELGAGTGIVGILAALQGGDVTITDLPVALEQIQDNVHANVPPGGRARVCALSWGIDQHVFPGNYDLVLGADIVYLEPTFPLLLGTLRHLCGPHGTIYLASKMRAEHGAETFFRRLLPQHFHLELAQRDEDVNVNIYRARHREVAPAGQHPFC.

S-adenosyl-L-methionine is bound by residues tryptophan 57, 83-85 (GAG), aspartate 104, tryptophan 133, and alanine 150.

It belongs to the methyltransferase superfamily. METTL21 family. In terms of assembly, interacts with members of the heat shock protein 70 and 90 families and of the TCP-1 chaperonin family, as well as with HSPD1, STIP1 and tubulin; at least some of these proteins may be methylation substrates.

It is found in the cytoplasm. It localises to the cytoskeleton. Its subcellular location is the microtubule organizing center. The protein localises to the centrosome. It carries out the reaction L-lysyl-[protein] + 3 S-adenosyl-L-methionine = N(6),N(6),N(6)-trimethyl-L-lysyl-[protein] + 3 S-adenosyl-L-homocysteine + 3 H(+). The catalysed reaction is L-lysyl-[protein] + S-adenosyl-L-methionine = N(6)-methyl-L-lysyl-[protein] + S-adenosyl-L-homocysteine + H(+). It catalyses the reaction N(6)-methyl-L-lysyl-[protein] + S-adenosyl-L-methionine = N(6),N(6)-dimethyl-L-lysyl-[protein] + S-adenosyl-L-homocysteine + H(+). The enzyme catalyses N(6),N(6)-dimethyl-L-lysyl-[protein] + S-adenosyl-L-methionine = N(6),N(6),N(6)-trimethyl-L-lysyl-[protein] + S-adenosyl-L-homocysteine + H(+). Protein-lysine methyltransferase that selectively mono-, di- and trimethylates 'Lys-165' of the translation elongation factors EEF1A1 and EEF1A2 in an aminoacyl-tRNA and GTP-dependent manner. EEF1A1 methylation by EEF1AKMT3 is dynamic as well as inducible by stress conditions, such as ER-stress, and plays a regulatory role on mRNA translation. The protein is EEF1A lysine methyltransferase 3 of Mus musculus (Mouse).